The following is a 403-amino-acid chain: Spindle assembly abnormal protein 5 (403 aa).

Disordered regions lie at residues Pro24–Ala79 and Thr96–Arg127. Basic and acidic residues predominate over residues Arg116–Arg127. Residues Asp128–Met163 are a coiled coil. 4 disordered regions span residues Ala174–Ile205, Ala255–Asn276, Arg302–Gln325, and Tyr355–Lys403. The segment covering Ser177–Arg194 has biased composition (basic and acidic residues). Residues Thr305–Glu321 show a composition bias toward basic and acidic residues. Residues Val360–Glu369 show a composition bias toward acidic residues. Basic and acidic residues predominate over residues Tyr379–Lys403.

Interacts with sas-6 via its coiled coil domain.

The protein resides in the cytoplasm. The protein localises to the cytoskeleton. It localises to the microtubule organizing center. It is found in the centrosome. Its subcellular location is the centriole. In terms of biological role, required for centrosome duplication. Essential for daughter-centriole formation. Requires both maternal and partenal expression, suggesting that it regulates centriole duplication during both spermatogenesis and early embryogenesis. This chain is Spindle assembly abnormal protein 5 (sas-5), found in Caenorhabditis briggsae.